A 384-amino-acid chain; its full sequence is S-adenosylmethionine synthase (384 aa).

His15 is an ATP binding site. Asp17 is a Mg(2+) binding site. Position 43 (Glu43) interacts with K(+). Positions 56 and 99 each coordinate L-methionine. Residues 99–109 (QSPDINQGVDR) form a flexible loop region. Residues 164-166 (DAK), 231-232 (RF), Asp240, 246-247 (RK), Ala263, and Lys267 contribute to the ATP site. Asp240 contributes to the L-methionine binding site. Lys271 is an L-methionine binding site.

Belongs to the AdoMet synthase family. As to quaternary structure, homotetramer; dimer of dimers. It depends on Mg(2+) as a cofactor. Requires K(+) as cofactor.

It localises to the cytoplasm. The enzyme catalyses L-methionine + ATP + H2O = S-adenosyl-L-methionine + phosphate + diphosphate. Its pathway is amino-acid biosynthesis; S-adenosyl-L-methionine biosynthesis; S-adenosyl-L-methionine from L-methionine: step 1/1. Functionally, catalyzes the formation of S-adenosylmethionine (AdoMet) from methionine and ATP. The overall synthetic reaction is composed of two sequential steps, AdoMet formation and the subsequent tripolyphosphate hydrolysis which occurs prior to release of AdoMet from the enzyme. The polypeptide is S-adenosylmethionine synthase (Shewanella pealeana (strain ATCC 700345 / ANG-SQ1)).